The following is a 225-amino-acid chain: Cardiotrophin-like cytokine factor 1 (225 aa).

Residues 1-27 (MDLRAGDSWGMLACLCTVLWHLPAVPA) form the signal peptide. A glycan (N-linked (GlcNAc...) asparagine) is linked at Asn29.

It belongs to the IL-6 superfamily. In terms of assembly, forms a heteromeric complex with cardiotrophin-like cytokine CRLF1/CLF-1; the CRLF1-CLCF1 complex is a ligand for the ciliary neurotrophic factor receptor/CNTFR. The CRLF1-CLCF1 heterodimer binds SORL1 (via N-terminal ectodomain); within this complex, the interaction is mediated predominantly by the CRLF1 moiety. The tripartite signaling complex formed by CRLF1, CLCF1 and CNTFR also binds SORL1.

The protein localises to the secreted. In terms of biological role, in complex with CRLF1, forms a heterodimeric neurotropic cytokine that plays a crucial role during neuronal development. Also stimulates B-cells. Binds to and activates the ILST/gp130 receptor. In Mus musculus (Mouse), this protein is Cardiotrophin-like cytokine factor 1 (Clcf1).